A 129-amino-acid chain; its full sequence is MAKEPARVKRRERKNITSGVAHVNASFNNTMVTITDAQGNTISWSSAGLMGFKGSRKSTPYAAQMAAEDAGRKAAEHGVRTLEVNVSGPGSGRESALRALQAVGMTITTIRDVTPIPHNGCRPPKRRRV.

The protein belongs to the universal ribosomal protein uS11 family. Part of the 30S ribosomal subunit. Interacts with proteins S7 and S18. Binds to IF-3.

Located on the platform of the 30S subunit, it bridges several disparate RNA helices of the 16S rRNA. Forms part of the Shine-Dalgarno cleft in the 70S ribosome. This Phenylobacterium zucineum (strain HLK1) protein is Small ribosomal subunit protein uS11.